The following is a 504-amino-acid chain: Pentatricopeptide repeat-containing protein At1g09220, mitochondrial (504 aa).

The transit peptide at 1–87 directs the protein to the mitochondrion; that stretch reads MFLFSSRRIT…FLFNPLLRCY (87 aa). 10 PPR repeats span residues 76–110, 120–156, 157–187, 188–222, 223–253, 255–289, 291–321, 324–358, 359–390, and 396–430; these read KLFLFNPLLRCYSLGETPLHAYFLYDQLQRLHFLS, DSFTYLFLLKASSNPRFPSLLLGIGLHGLTLKLGFES, HVYVQTALVGMYLVGGNMIDAHKVFDEMPER, NPVTWNVMITGLTNLGDFEKALCFLEKMPNRTVVS, WTTIIDGYARVDKPKEAILLFSRMVACDAIK, NEITILAILPAVWNLGDLKMCGSVHAYVGKRGFVP, DIRVTNSLIDAYAKCGCIQSAFKFFIEIPNG, NLVSWTTMISAFAIHGMGKEAVSMFKDMERLGLKP, NRVTMISVLNACSHGGLAEEEFLEFFNTMVNE, and DVKHYGCLVDMLRRKGRLEEAEKIALEIPIEEKAV. The type E motif; degenerate stretch occupies residues 431–504; it reads VWRMLLGACS…AKLPGHSQVT (74 aa).

Belongs to the PPR family. PCMP-E subfamily.

Its subcellular location is the mitochondrion. This is Pentatricopeptide repeat-containing protein At1g09220, mitochondrial (PCMP-E25) from Arabidopsis thaliana (Mouse-ear cress).